Reading from the N-terminus, the 310-residue chain is Carbamate kinase-like protein YqeA (310 aa).

It belongs to the carbamate kinase family.

In Escherichia coli (strain K12), this protein is Carbamate kinase-like protein YqeA (yqeA).